The following is a 255-amino-acid chain: 3-dehydroquinate dehydratase (255 aa).

Residues 47–49 (EWR) and R83 contribute to the 3-dehydroquinate site. H144 serves as the catalytic Proton donor/acceptor. K171 (schiff-base intermediate with substrate) is an active-site residue. Residues R214, S233, and Q237 each contribute to the 3-dehydroquinate site.

Belongs to the type-I 3-dehydroquinase family. In terms of assembly, homodimer or homotetramer.

The enzyme catalyses 3-dehydroquinate = 3-dehydroshikimate + H2O. The protein operates within metabolic intermediate biosynthesis; chorismate biosynthesis; chorismate from D-erythrose 4-phosphate and phosphoenolpyruvate: step 3/7. Involved in the third step of the chorismate pathway, which leads to the biosynthesis of aromatic amino acids. Catalyzes the cis-dehydration of 3-dehydroquinate (DHQ) and introduces the first double bond of the aromatic ring to yield 3-dehydroshikimate. The reaction involves the formation of an imine intermediate between the keto group of 3-dehydroquinate and the epsilon-amino group of Lys-170 at the active site. This is 3-dehydroquinate dehydratase from Clostridioides difficile (strain 630) (Peptoclostridium difficile).